The primary structure comprises 310 residues: Ribosomal RNA small subunit methyltransferase H (310 aa).

S-adenosyl-L-methionine-binding positions include 32–34 (GGH), Asp52, Phe79, Asp100, and Gln107.

It belongs to the methyltransferase superfamily. RsmH family.

It localises to the cytoplasm. The catalysed reaction is cytidine(1402) in 16S rRNA + S-adenosyl-L-methionine = N(4)-methylcytidine(1402) in 16S rRNA + S-adenosyl-L-homocysteine + H(+). Functionally, specifically methylates the N4 position of cytidine in position 1402 (C1402) of 16S rRNA. In Bacillus cereus (strain G9842), this protein is Ribosomal RNA small subunit methyltransferase H.